Reading from the N-terminus, the 979-residue chain is Translation initiation factor IF-2 (979 aa).

The interval Val68–Ala386 is disordered. 3 stretches are compositionally biased toward basic and acidic residues: residues Gln102–Glu179, Glu217–Arg229, and Thr260–Gly273. The segment covering Arg317–Ser326 has biased composition (polar residues). Over residues Asp347–Leu356 the composition is skewed to basic and acidic residues. The region spanning Ala478–Glu646 is the tr-type G domain. Residues Gly487–Thr494 are G1. Gly487–Thr494 contributes to the GTP binding site. Residues Gly512–His516 form a G2 region. The interval Asp534–Gly537 is G3. Residues Asp534 to His538 and Asn588 to Asp591 each bind GTP. Positions Asn588–Asp591 are G4. A G5 region spans residues Ser624–Lys626.

Belongs to the TRAFAC class translation factor GTPase superfamily. Classic translation factor GTPase family. IF-2 subfamily.

It is found in the cytoplasm. Functionally, one of the essential components for the initiation of protein synthesis. Protects formylmethionyl-tRNA from spontaneous hydrolysis and promotes its binding to the 30S ribosomal subunits. Also involved in the hydrolysis of GTP during the formation of the 70S ribosomal complex. The chain is Translation initiation factor IF-2 from Porphyromonas gingivalis (strain ATCC BAA-308 / W83).